We begin with the raw amino-acid sequence, 1198 residues long: Tetratricopeptide repeat protein 17 (1198 aa).

A TPR 1 repeat occupies 295 to 328 (FTSYYTLGNIYAMLGEYNHSVLCYDHALQAKPGF). The stretch at 340–382 (CQQKLEQKLEAQHRSLQRTLNELKEYQKQHDHYLRQQEILEKH) forms a coiled coil. TPR repeat units follow at residues 619–652 (WLIL…APVQ) and 689–722 (PLTF…STKC). Disordered regions lie at residues 774 to 793 (LDAA…PVLS) and 902 to 954 (VKKP…YQSL). Positions 902 to 914 (VKKPKGDHKKPPG) are enriched in basic residues. TPR repeat units follow at residues 1071–1105 (SWVL…APHQ), 1108–1141 (DVPL…APHF), and 1142–1175 (AVNH…QPEF).

The protein belongs to the TTC17 family. In terms of assembly, interacts with CATIP.

It is found in the cytoplasm. It localises to the cell membrane. The protein resides in the cytoskeleton. Functionally, plays a role in primary ciliogenesis by modulating actin polymerization. In Mus musculus (Mouse), this protein is Tetratricopeptide repeat protein 17 (Ttc17).